The chain runs to 52 residues: Large ribosomal subunit protein eL39 (52 aa).

It belongs to the eukaryotic ribosomal protein eL39 family.

In Desulfurococcus amylolyticus (strain DSM 18924 / JCM 16383 / VKM B-2413 / 1221n) (Desulfurococcus kamchatkensis), this protein is Large ribosomal subunit protein eL39.